The following is a 235-amino-acid chain: Pyridoxine 5'-phosphate synthase (235 aa).

N6 provides a ligand contact to 3-amino-2-oxopropyl phosphate. 8–9 provides a ligand contact to 1-deoxy-D-xylulose 5-phosphate; that stretch reads DH. Position 17 (R17) interacts with 3-amino-2-oxopropyl phosphate. Catalysis depends on H42, which acts as the Proton acceptor. Residues R44 and H49 each contribute to the 1-deoxy-D-xylulose 5-phosphate site. The active-site Proton acceptor is E69. Position 99 (T99) interacts with 1-deoxy-D-xylulose 5-phosphate. H188 functions as the Proton donor in the catalytic mechanism. Residues G189 and 210–211 contribute to the 3-amino-2-oxopropyl phosphate site; that span reads GH.

It belongs to the PNP synthase family. As to quaternary structure, homooctamer; tetramer of dimers.

Its subcellular location is the cytoplasm. It carries out the reaction 3-amino-2-oxopropyl phosphate + 1-deoxy-D-xylulose 5-phosphate = pyridoxine 5'-phosphate + phosphate + 2 H2O + H(+). It functions in the pathway cofactor biosynthesis; pyridoxine 5'-phosphate biosynthesis; pyridoxine 5'-phosphate from D-erythrose 4-phosphate: step 5/5. Catalyzes the complicated ring closure reaction between the two acyclic compounds 1-deoxy-D-xylulose-5-phosphate (DXP) and 3-amino-2-oxopropyl phosphate (1-amino-acetone-3-phosphate or AAP) to form pyridoxine 5'-phosphate (PNP) and inorganic phosphate. This Wolbachia pipientis subsp. Culex pipiens (strain wPip) protein is Pyridoxine 5'-phosphate synthase.